Reading from the N-terminus, the 241-residue chain is Translation initiation factor IF-3 (241 aa).

Residues 193 to 203 (AAEKARQKAIQ) are compositionally biased toward basic and acidic residues. Positions 193 to 241 (AAEKARQKAIQEGRAAPAQDDTEDEEIEKLERELEEQDDEDDDEAEATE) are disordered. The span at 212-241 (DDTEDEEIEKLERELEEQDDEDDDEAEATE) shows a compositional bias: acidic residues.

It belongs to the IF-3 family. As to quaternary structure, monomer.

The protein resides in the cytoplasm. Functionally, IF-3 binds to the 30S ribosomal subunit and shifts the equilibrium between 70S ribosomes and their 50S and 30S subunits in favor of the free subunits, thus enhancing the availability of 30S subunits on which protein synthesis initiation begins. The sequence is that of Translation initiation factor IF-3 from Sorangium cellulosum (strain So ce56) (Polyangium cellulosum (strain So ce56)).